The sequence spans 460 residues: Chromosomal replication initiator protein DnaA 2 (460 aa).

The segment at 1–68 (MRAWEDFLLL…KTSLVNNNGK (68 aa)) is domain I, interacts with DnaA modulators. The domain II stretch occupies residues 68-102 (KLIRVHITSLDKTAPFYKEKQIQQEKTAYFTMQYG). Residues 103–321 (NVNPEMTFGN…DALKLLSKRV (219 aa)) form a domain III, AAA+ region region. Residues glycine 151, glycine 153, lysine 154, and threonine 155 each coordinate ATP. Residues 322–460 (AYKKLAQQLL…EFFPEEEISC (139 aa)) are domain IV, binds dsDNA.

The protein belongs to the DnaA family. As to quaternary structure, oligomerizes as a right-handed, spiral filament on DNA at oriC.

It is found in the cytoplasm. Plays an essential role in the initiation and regulation of chromosomal replication. ATP-DnaA binds to the origin of replication (oriC) to initiate formation of the DNA replication initiation complex once per cell cycle. Binds the DnaA box (a 9 base pair repeat at the origin) and separates the double-stranded (ds)DNA. Forms a right-handed helical filament on oriC DNA; dsDNA binds to the exterior of the filament while single-stranded (ss)DNA is stabiized in the filament's interior. The ATP-DnaA-oriC complex binds and stabilizes one strand of the AT-rich DNA unwinding element (DUE), permitting loading of DNA polymerase. After initiation quickly degrades to an ADP-DnaA complex that is not apt for DNA replication. Binds acidic phospholipids. The sequence is that of Chromosomal replication initiator protein DnaA 2 from Chlamydia caviae (strain ATCC VR-813 / DSM 19441 / 03DC25 / GPIC) (Chlamydophila caviae).